We begin with the raw amino-acid sequence, 504 residues long: Anaerobic nitric oxide reductase transcription regulator NorR (504 aa).

A 4-aspartylphosphate modification is found at D57. The 230-residue stretch at 187–416 (MIGLSPGMTQ…LEHAIHRAVV (230 aa)) folds into the Sigma-54 factor interaction domain. ATP-binding positions include 215–222 (GETGTGKE) and 278–287 (ADNGTLFLDE). A DNA-binding region (H-T-H motif) is located at residues 479–498 (WAACARMLETDVANLHRLAK).

It participates in nitrogen metabolism; nitric oxide reduction. In terms of biological role, required for the expression of anaerobic nitric oxide (NO) reductase, acts as a transcriptional activator for at least the norVW operon. Activation also requires sigma-54. This chain is Anaerobic nitric oxide reductase transcription regulator NorR, found in Escherichia coli O139:H28 (strain E24377A / ETEC).